The primary structure comprises 388 residues: Cytochrome b (388 aa).

4 helical membrane passes run 38-58 (FGCL…FLAM), 82-104 (WLLR…LHIF), 119-139 (VWCL…IGYV), and 185-205 (FFSL…LHLA). Heme b-binding residues include H88 and H102. Heme b is bound by residues H189 and H203. H208 is an a ubiquinone binding site. The next 4 membrane-spanning stretches (helical) occupy residues 231–251 (FYVK…IWIF), 295–315 (AGGV…PFFK), 327–347 (IHQG…WIGC), and 354–373 (FVTI…AITP).

The protein belongs to the cytochrome b family. The main subunits of complex b-c1 are: cytochrome b, cytochrome c1 and the Rieske protein. Requires heme b as cofactor.

The protein localises to the mitochondrion inner membrane. Its function is as follows. Component of the ubiquinol-cytochrome c reductase complex (complex III or cytochrome b-c1 complex) that is part of the mitochondrial respiratory chain. The b-c1 complex mediates electron transfer from ubiquinol to cytochrome c. Contributes to the generation of a proton gradient across the mitochondrial membrane that is then used for ATP synthesis. In Zea mays (Maize), this protein is Cytochrome b (MT-CYB).